The primary structure comprises 472 residues: MTVETFKPKQTTTLDIPVKTLEAASTNAVTTGNRIGFVSLGCPKNLVDSERILTQLRIDGYEVTNSYDNADLVIVNTCGFIDAAVEESLDAVREALEENGKVIVTGCLGAKENQIREVHPDVLEITGPHSYEAVLKHVHKYVPKPEHNPFTSLIPQTGVKLTPKHYAYLKISEGCDNRCTFCIIPSLRGDLDSRPAGSILDEAKRLVESGVQEILVVSQDTSAYGKDKGGRTDFWNGMPVKQDITSLARQLGKMGAWVRLHYIYPYPWVDDLIPLMAEGLILPYLDIPMQHASPRILKMMKRPGRVDRQLEAIQRWREICPDLVIRSTFIVGFPGETEEDFQILLDFLKEARLDRVGCFKYSEVDGAVANTIAELISEEVKEDRYHRFMEVQAEISAERLARFVGRTLDILIDDVDEEGAIGRSFADAPEIDGMVFINGETELEPGMLVRARITHSDEHDLWAEVVDADTQD.

In terms of domain architecture, MTTase N-terminal spans 33 to 143; sequence NRIGFVSLGC…VLKHVHKYVP (111 aa). C42, C78, C107, C175, C179, and C182 together coordinate [4Fe-4S] cluster. The Radical SAM core domain maps to 161–398; that stretch reads LTPKHYAYLK…MEVQAEISAE (238 aa). Positions 401-467 constitute a TRAM domain; sequence ARFVGRTLDI…EHDLWAEVVD (67 aa).

Belongs to the methylthiotransferase family. RimO subfamily. Requires [4Fe-4S] cluster as cofactor.

Its subcellular location is the cytoplasm. It carries out the reaction L-aspartate(89)-[ribosomal protein uS12]-hydrogen + (sulfur carrier)-SH + AH2 + 2 S-adenosyl-L-methionine = 3-methylsulfanyl-L-aspartate(89)-[ribosomal protein uS12]-hydrogen + (sulfur carrier)-H + 5'-deoxyadenosine + L-methionine + A + S-adenosyl-L-homocysteine + 2 H(+). Functionally, catalyzes the methylthiolation of an aspartic acid residue of ribosomal protein uS12. In Shewanella baltica (strain OS195), this protein is Ribosomal protein uS12 methylthiotransferase RimO.